A 358-amino-acid chain; its full sequence is Putative glycylpeptide N-tetradecanoyltransferase (358 aa).

The protein belongs to the NMT family.

The catalysed reaction is N-terminal glycyl-[protein] + tetradecanoyl-CoA = N-tetradecanoylglycyl-[protein] + CoA + H(+). Adds a myristoyl group to the N-terminal glycine residue of certain proteins. This chain is Putative glycylpeptide N-tetradecanoyltransferase, found in Acanthamoeba polyphaga (Amoeba).